A 280-amino-acid chain; its full sequence is 4-diphosphocytidyl-2-C-methyl-D-erythritol kinase (280 aa).

Lys11 is an active-site residue. 95–105 (PVGAGLGGGSS) is an ATP binding site. Asp137 is an active-site residue.

This sequence belongs to the GHMP kinase family. IspE subfamily.

It carries out the reaction 4-CDP-2-C-methyl-D-erythritol + ATP = 4-CDP-2-C-methyl-D-erythritol 2-phosphate + ADP + H(+). It participates in isoprenoid biosynthesis; isopentenyl diphosphate biosynthesis via DXP pathway; isopentenyl diphosphate from 1-deoxy-D-xylulose 5-phosphate: step 3/6. Its function is as follows. Catalyzes the phosphorylation of the position 2 hydroxy group of 4-diphosphocytidyl-2C-methyl-D-erythritol. The sequence is that of 4-diphosphocytidyl-2-C-methyl-D-erythritol kinase from Citrifermentans bemidjiense (strain ATCC BAA-1014 / DSM 16622 / JCM 12645 / Bem) (Geobacter bemidjiensis).